The primary structure comprises 110 residues: UPF0122 protein GK1195 (110 aa).

This sequence belongs to the UPF0122 family.

In terms of biological role, might take part in the signal recognition particle (SRP) pathway. This is inferred from the conservation of its genetic proximity to ftsY/ffh. May be a regulatory protein. The protein is UPF0122 protein GK1195 of Geobacillus kaustophilus (strain HTA426).